The sequence spans 457 residues: Exodeoxyribonuclease 7 large subunit (457 aa).

Belongs to the XseA family. As to quaternary structure, heterooligomer composed of large and small subunits.

Its subcellular location is the cytoplasm. It catalyses the reaction Exonucleolytic cleavage in either 5'- to 3'- or 3'- to 5'-direction to yield nucleoside 5'-phosphates.. Its function is as follows. Bidirectionally degrades single-stranded DNA into large acid-insoluble oligonucleotides, which are then degraded further into small acid-soluble oligonucleotides. The sequence is that of Exodeoxyribonuclease 7 large subunit from Enterobacter sp. (strain 638).